Reading from the N-terminus, the 851-residue chain is Putative serine/threonine-protein kinase 019R (851 aa).

5 disordered regions span residues 1 to 24 (MATN…RTIK), 61 to 91 (PRVA…RGGP), 104 to 160 (GGAS…KRGG), 190 to 216 (GLSP…ARRS), and 340 to 400 (SRPS…GEPR). Residues 125 to 141 (ARRQSPAEAAEASPCPE) are compositionally biased toward low complexity. Basic residues predominate over residues 196–216 (SHMRKSPARRSPARRSPARRS). The span at 340–366 (SRPSGVSRTSGTSGSSGSSASSRPPNS) shows a compositional bias: low complexity. A Protein kinase domain is found at 456–851 (AVSDNVIGQG…GEREIESFTM (396 aa)). ATP-binding positions include 462-470 (IGQGSWGSV) and Lys-485. Residue Asp-608 is the Proton acceptor of the active site.

This sequence belongs to the protein kinase superfamily. Ser/Thr protein kinase family.

It catalyses the reaction L-seryl-[protein] + ATP = O-phospho-L-seryl-[protein] + ADP + H(+). The enzyme catalyses L-threonyl-[protein] + ATP = O-phospho-L-threonyl-[protein] + ADP + H(+). In Dryophytes versicolor (chameleon treefrog), this protein is Putative serine/threonine-protein kinase 019R.